Here is a 190-residue protein sequence, read N- to C-terminus: Probable calcium-binding protein CML27 (190 aa).

EF-hand domains are found at residues Leu-27–Gly-62, Asp-115–Pro-150, and Arg-153–Trp-188. Positions 40, 42, 44, 46, 51, 128, 130, 132, 139, 166, 168, 170, 172, and 177 each coordinate Ca(2+).

Potential calcium sensor. The polypeptide is Probable calcium-binding protein CML27 (CML27) (Oryza sativa subsp. japonica (Rice)).